The primary structure comprises 3224 residues: E3 SUMO-protein ligase RanBP2 (3224 aa).

At threonine 19 the chain carries Phosphothreonine. Serine 21 bears the Phosphoserine mark. 7 TPR repeats span residues 26-59 (SIKGFYFAKLYYEAKEYDLAKKYICTYINVQERD), 60-93 (PKAHRFLGLLYELEENTDKAVECYRRSVELNPTQ), 94-128 (KDLVLKIAELLCKNDVTDGRAKYWVERAAKLFPGS), 165-201 (VHVNIRLVEVYRSTKRLKDAVAHCHEAERNIALRSSL), 287-319 (GHFYMHAGSLLLKMGQHSSNVQWRALSELAALC), 583-616 (QKTGSGLNSFYDQREYIGRSVHYWKKVLPLLKII), and 648-681 (EDAHITFAILDVVNGNIEDAMTAFESIQSVVSYW). Residues 767–802 (SLRNADSEIKHSTPSHTRYSLSPSKSYKYSPKTPPR) are disordered. Threonine 779 is modified (phosphothreonine). A phosphoserine mark is found at serine 781, serine 788, and serine 837. Over residues 785–797 (YSLSPSKSYKYSP) the composition is skewed to low complexity. An Asymmetric dimethylarginine modification is found at arginine 945. Phosphoserine occurs at positions 948 and 955. The stretch at 1001–1002 (FG) is repeat 1. The tract at residues 1001-3206 (FGKTNFVQPM…DTVKKIESFG (2206 aa)) is 22 X 2 AA repeats of F-G. Residue arginine 1016 is modified to Asymmetric dimethylarginine; alternate. Arginine 1016 is modified (omega-N-methylarginine; alternate). Position 1098 is a phosphothreonine (threonine 1098). Repeat 2 spans residues 1101-1102 (FG). Residues serine 1103, serine 1107, and serine 1110 each carry the phosphoserine modification. Residues 1138–1174 (GKSVFGTPTLETANKNHETDGGSAHGDDDDDGPHFEP) form a disordered region. Residues 1142-1143 (FG) form repeat 3. The residue at position 1144 (threonine 1144) is a Phosphothreonine. Phosphoserine is present on residues serine 1160 and serine 1249. A RanBD1 1 domain is found at 1171–1307 (HFEPVVPLPD…FEEAQSILKA (137 aa)). Residue lysine 1350 forms a Glycyl lysine isopeptide (Lys-Gly) (interchain with G-Cter in SUMO2) linkage. A RanBP2-type 1 zinc finger spans residues 1351–1381 (KEGSWWHCNSCSLKNASTAKKCVSCQNLNPS). A phosphothreonine mark is found at threonine 1396 and threonine 1412. Residue lysine 1414 forms a Glycyl lysine isopeptide (Lys-Gly) (interchain with G-Cter in SUMO2) linkage. The RanBP2-type 2 zinc-finger motif lies at 1415–1444 (KEGHWDCSICLVRNEPTVSRCIACQNTKSA). Phosphoserine occurs at positions 1443, 1450, and 1456. Residues 1459–1460 (FG) form repeat 4. Residues 1479 to 1508 (KEGQWDCSACLVQNEGSSTKCAACQNPRKQ) form a RanBP2-type 3 zinc finger. Serine 1509 and serine 1520 each carry phosphoserine. Residues 1523–1524 (FG) form repeat 5. The segment at 1543 to 1572 (KEGQWDCSSCLVRNEANATRCVACQNPDKP) adopts a RanBP2-type 4 zinc-finger fold. A disordered region spans residues 1569–1595 (PDKPSPSTSVPAPASFKFGTSETSKAP). Residue serine 1573 is modified to Phosphoserine. The segment covering 1573-1583 (SPSTSVPAPAS) has biased composition (low complexity). Residues 1586-1587 (FG) form repeat 6. Residue lysine 1596 forms a Glycyl lysine isopeptide (Lys-Gly) (interchain with G-Cter in SUMO2) linkage. Lysine 1605 is covalently cross-linked (Glycyl lysine isopeptide (Lys-Gly) (interchain with G-Cter in SUMO1); alternate). Lysine 1605 is covalently cross-linked (Glycyl lysine isopeptide (Lys-Gly) (interchain with G-Cter in SUMO2); alternate). The RanBP2-type 5 zinc-finger motif lies at 1606–1635 (KEGQWDCSVCLVRNEASATKCVACQNPGKQ). The span at 1632–1653 (PGKQNQTTSAVSTPASSETSRA) shows a compositional bias: polar residues. The segment at 1632–1657 (PGKQNQTTSAVSTPASSETSRAPKSG) is disordered. A Glycyl lysine isopeptide (Lys-Gly) (interchain with G-Cter in SUMO2) cross-link involves residue lysine 1655. Lysine 1664 is covalently cross-linked (Glycyl lysine isopeptide (Lys-Gly) (interchain with G-Cter in SUMO1); alternate). Lysine 1664 participates in a covalent cross-link: Glycyl lysine isopeptide (Lys-Gly) (interchain with G-Cter in SUMO2); alternate. The segment at 1665 to 1694 (KEGQWDCSVCLVRNEASATKCIACQSPGKQ) adopts a RanBP2-type 6 zinc-finger fold. The segment covering 1691–1712 (PGKQNQTTSAVSTPASSETSKA) has biased composition (polar residues). The tract at residues 1691 to 1716 (PGKQNQTTSAVSTPASSETSKAPKSG) is disordered. A Glycyl lysine isopeptide (Lys-Gly) (interchain with G-Cter in SUMO2) cross-link involves residue lysine 1714. A Glycyl lysine isopeptide (Lys-Gly) (interchain with G-Cter in SUMO1); alternate cross-link involves residue lysine 1723. A Glycyl lysine isopeptide (Lys-Gly) (interchain with G-Cter in SUMO2); alternate cross-link involves residue lysine 1723. 2 RanBP2-type zinc fingers span residues 1724–1753 (KEGQWDCSVCLVRNEASATKCIACQCPSKQ) and 1781–1810 (RKGQWDCSVCCVQNESSSLKCVACDASKPT). Position 1835 is a phosphoserine (serine 1835). 2 tandem repeats follow at residues 1852-1853 (FG) and 1861-1862 (FG). Residues serine 1869 and serine 1871 each carry the phosphoserine modification. 3 repeat units span residues 1900 to 1901 (FG), 1938 to 1939 (FG), and 1961 to 1962 (FG). N6-acetyllysine is present on lysine 1977. Phosphothreonine is present on threonine 2005. Serine 2008 carries the post-translational modification Phosphoserine. The 137-residue stretch at 2012–2148 (HFEPVVQMPE…FEECQRLLLD (137 aa)) folds into the RanBD1 2 domain. Lysine 2022 is covalently cross-linked (Glycyl lysine isopeptide (Lys-Gly) (interchain with G-Cter in SUMO2)). Positions 2147 to 2287 (LDIPLQTPHK…SKSPGKLNQS (141 aa)) are interaction with BICD2. The residue at position 2153 (threonine 2153) is a Phosphothreonine. The disordered stretch occupies residues 2188 to 2224 (QTKVTEEENKGSGTGAAGASDTTIKPNPENTGPTLEW). The span at 2211–2220 (IKPNPENTGP) shows a compositional bias: polar residues. Phosphoserine is present on residues serine 2246 and serine 2251. Repeat unit 12 spans residues 2260–2261 (FG). A phosphoserine mark is found at serine 2270, serine 2280, and serine 2290. Positions 2274 to 2292 (ALSPSKSPGKLNQSGTSVG) are enriched in polar residues. The interval 2274-2307 (ALSPSKSPGKLNQSGTSVGTDEESDVTQEEERDG) is disordered. Threonine 2293 is subject to Phosphothreonine. Residues 2293 to 2305 (TDEESDVTQEEER) show a composition bias toward acidic residues. Residue serine 2297 is modified to Phosphoserine. The RanBD1 3 domain occupies 2309-2445 (YFEPVVPLPD…FDEAKTAQEK (137 aa)). 3 positions are modified to phosphoserine: serine 2462, serine 2493, and serine 2510. The stretch at 2516–2517 (FG) is repeat 13. Lysine 2522 participates in a covalent cross-link: Glycyl lysine isopeptide (Lys-Gly) (interchain with G-Cter in SUMO2). Serine 2526 is modified (phosphoserine). 2 tandem repeats follow at residues 2535-2536 (FG) and 2545-2546 (FG). Residues 2556–2569 (NNSETSSVAQSGSE) show a composition bias toward polar residues. A disordered region spans residues 2556 to 2629 (NNSETSSVAQ…KKKPEDSPSD (74 aa)). A compositionally biased stretch (basic and acidic residues) spans 2570–2593 (SKVEPNKCELSKNSDIEQSSDSKV). A Glycyl lysine isopeptide (Lys-Gly) (interchain with G-Cter in SUMO) cross-link involves residue lysine 2592. Lysine 2594 participates in a covalent cross-link: Glycyl lysine isopeptide (Lys-Gly) (interchain with G-Cter in SUMO1); alternate. A Glycyl lysine isopeptide (Lys-Gly) (interchain with G-Cter in SUMO2); alternate cross-link involves residue lysine 2594. A compositionally biased stretch (polar residues) spans 2594–2611 (KNLSASFPTEESSINYTF). A Glycyl lysine isopeptide (Lys-Gly) (interchain with G-Cter in SUMO2) cross-link involves residue lysine 2612. Phosphothreonine is present on threonine 2613. A compositionally biased stretch (basic and acidic residues) spans 2613–2625 (TPEKAKEKKKPED). Residues 2631 to 2635 (DVLIV) form an interaction with sumoylated RANGAP1 region. 2 tandem repeats follow at residues 2633-2685 (LIVY…KKLN) and 2711-2761 (IIVW…QKVQ). Positions 2633-2685 (LIVYELTPTAEQKALATKLKLPPTFFCYKNRPDYVSEEEEDDEDFETAVKKLN) are interaction with UBE2I. The interval 2633-2710 (LIVYELTPTA…ENTADNEKEC (78 aa)) is required for E3 SUMO-ligase activity. The interval 2633-2761 (LIVYELTPTA…DFQSELQKVQ (129 aa)) is 2 X 50 AA approximate repeats. Tyrosine 2666 bears the Phosphotyrosine mark. Phosphoserine occurs at positions 2668 and 2741. The segment at 2686–2761 (GKLYLEGSEK…DFQSELQKVQ (76 aa)) is interaction with SUMO1. Phosphothreonine is present on threonine 2743. The disordered stretch occupies residues 2791-2818 (CKSEEPDSITKSISSPSVSSETMDKPVD). A Glycyl lysine isopeptide (Lys-Gly) (interchain with G-Cter in SUMO2) cross-link involves residue lysine 2792. Residues 2799–2810 (ITKSISSPSVSS) show a composition bias toward low complexity. Serine 2805 bears the Phosphoserine mark. Residue lysine 2815 forms a Glycyl lysine isopeptide (Lys-Gly) (interchain with G-Cter in SUMO2) linkage. 4 tandem repeats follow at residues 2840–2841 (FG), 2842–2843 (FG), 2863–2864 (FG), and 2880–2881 (FG). The residue at position 2900 (serine 2900) is a Phosphoserine. One can recognise a RanBD1 4 domain in the interval 2911–3046 (HFEPIVSLPE…FEECQQNLMK (136 aa)). In terms of domain architecture, PPIase cyclophilin-type spans 3067–3223 (FFDVCADGEP…RRITITECGQ (157 aa)). 3 tandem repeats follow at residues 3106–3107 (FG), 3189–3190 (FG), and 3205–3206 (FG). Serine 3207 carries the phosphoserine modification.

It belongs to the RanBP2 E3 ligase family. Part of the nuclear pore complex. Forms a complex with NXT1, NXF1 and RANGAP1. Forms a tight complex with RANBP1 and UBE2I. Interacts with SUMO1 but not SUMO2. Interacts with PRKN. Interacts with sumoylated RANGAP1. Interacts with CDCA8. Interacts with PML (isoform PML-4). Interacts with BICD2. Interacts with MCM3AP isoform GANP. Interacts with COX11. Interacts with synaptic plasticity regulator PANTS. In terms of processing, polyubiquitinated by PRKN, which leads to proteasomal degradation. Post-translationally, the inner channel of the NPC has a different redox environment from the cytoplasm and allows the formation of interchain disulfide bonds between some nucleoporins, the significant increase of these linkages upon oxidative stress reduces the permeability of the NPC.

The protein localises to the nucleus. Its subcellular location is the nucleus membrane. The protein resides in the nuclear pore complex. It localises to the nucleus envelope. It functions in the pathway protein modification; protein sumoylation. Its function is as follows. E3 SUMO-protein ligase which facilitates SUMO1 and SUMO2 conjugation by UBE2I. Involved in transport factor (Ran-GTP, karyopherin)-mediated protein import via the F-G repeat-containing domain which acts as a docking site for substrates. Component of the nuclear export pathway. Specific docking site for the nuclear export factor exportin-1. Inhibits EIF4E-dependent mRNA export. Sumoylates PML at 'Lys-490' which is essential for the proper assembly of PML-NB. Recruits BICD2 to the nuclear envelope and cytoplasmic stacks of nuclear pore complex known as annulate lamellae during G2 phase of cell cycle. Binds single-stranded RNA (in vitro). Probable inactive PPIase with no peptidyl-prolyl cis-trans isomerase activity. The sequence is that of E3 SUMO-protein ligase RanBP2 (RANBP2) from Pan troglodytes (Chimpanzee).